The chain runs to 513 residues: DNA damage-binding protein CMR1 (513 aa).

Over residues 35 to 45 the composition is skewed to basic and acidic residues; the sequence is RSEAGIEDHRK. Positions 35–103 are disordered; sequence RSEAGIEDHR…TAQNVKQEEE (69 aa). WD repeat units lie at residues 183–224, 237–277, 329–369, 386–425, 438–477, and 478–513; these read IVHE…PDPE, LFSR…SDEL, LSDK…AKPD, NSRL…PSEL, GRWV…LSHL, and ETST…APQE.

This sequence belongs to the WD repeat DDB2/WDR76 family.

DNA-binding protein that binds to both single- and double-stranded DNA. Binds preferentially to UV-damaged DNA. May be involved in DNA-metabolic processes. The polypeptide is DNA damage-binding protein CMR1 (Eremothecium gossypii (strain ATCC 10895 / CBS 109.51 / FGSC 9923 / NRRL Y-1056) (Yeast)).